We begin with the raw amino-acid sequence, 192 residues long: Imidazoleglycerol-phosphate dehydratase (192 aa).

Belongs to the imidazoleglycerol-phosphate dehydratase family.

Its subcellular location is the cytoplasm. The enzyme catalyses D-erythro-1-(imidazol-4-yl)glycerol 3-phosphate = 3-(imidazol-4-yl)-2-oxopropyl phosphate + H2O. The protein operates within amino-acid biosynthesis; L-histidine biosynthesis; L-histidine from 5-phospho-alpha-D-ribose 1-diphosphate: step 6/9. In Staphylococcus epidermidis (strain ATCC 12228 / FDA PCI 1200), this protein is Imidazoleglycerol-phosphate dehydratase.